An 81-amino-acid polypeptide reads, in one-letter code: Photosystem I iron-sulfur center (81 aa).

4Fe-4S ferredoxin-type domains are found at residues 2–31 (SHSV…MIPW) and 39–68 (IASA…VRVY). Positions 11, 14, 17, 21, 48, 51, 54, and 58 each coordinate [4Fe-4S] cluster.

The eukaryotic PSI reaction center is composed of at least 11 subunits. Requires [4Fe-4S] cluster as cofactor.

The protein resides in the plastid. Its subcellular location is the chloroplast thylakoid membrane. The enzyme catalyses reduced [plastocyanin] + hnu + oxidized [2Fe-2S]-[ferredoxin] = oxidized [plastocyanin] + reduced [2Fe-2S]-[ferredoxin]. Functionally, apoprotein for the two 4Fe-4S centers FA and FB of photosystem I (PSI); essential for photochemical activity. FB is the terminal electron acceptor of PSI, donating electrons to ferredoxin. The C-terminus interacts with PsaA/B/D and helps assemble the protein into the PSI complex. Required for binding of PsaD and PsaE to PSI. PSI is a plastocyanin-ferredoxin oxidoreductase, converting photonic excitation into a charge separation, which transfers an electron from the donor P700 chlorophyll pair to the spectroscopically characterized acceptors A0, A1, FX, FA and FB in turn. This is Photosystem I iron-sulfur center from Sorghum bicolor (Sorghum).